The sequence spans 946 residues: Bifunctional glutamine synthetase adenylyltransferase/adenylyl-removing enzyme (946 aa).

Residues 1–440 (MKPLSSPLQQ…VFNELIGDDE (440 aa)) are adenylyl removase. Residues 449-946 (SEQWRELWQD…ASWQKWLVEE (498 aa)) are adenylyl transferase.

The protein belongs to the GlnE family. The cofactor is Mg(2+).

The enzyme catalyses [glutamine synthetase]-O(4)-(5'-adenylyl)-L-tyrosine + phosphate = [glutamine synthetase]-L-tyrosine + ADP. It catalyses the reaction [glutamine synthetase]-L-tyrosine + ATP = [glutamine synthetase]-O(4)-(5'-adenylyl)-L-tyrosine + diphosphate. Its function is as follows. Involved in the regulation of glutamine synthetase GlnA, a key enzyme in the process to assimilate ammonia. When cellular nitrogen levels are high, the C-terminal adenylyl transferase (AT) inactivates GlnA by covalent transfer of an adenylyl group from ATP to specific tyrosine residue of GlnA, thus reducing its activity. Conversely, when nitrogen levels are low, the N-terminal adenylyl removase (AR) activates GlnA by removing the adenylyl group by phosphorolysis, increasing its activity. The regulatory region of GlnE binds the signal transduction protein PII (GlnB) which indicates the nitrogen status of the cell. The polypeptide is Bifunctional glutamine synthetase adenylyltransferase/adenylyl-removing enzyme (Shigella flexneri).